The sequence spans 316 residues: Glutathione synthetase (316 aa).

An ATP-grasp domain is found at 124–311 (NEKLAALLFP…IAGLLFDAIE (188 aa)). An ATP-binding site is contributed by 151 to 208 (FVLAHGQAVLKPLDGMGGRSIFRSGTGDPNLNVILETLTDGGRKLTLAQRFIPDITAG). Mg(2+)-binding residues include Glu282 and Asn284.

This sequence belongs to the prokaryotic GSH synthase family. The cofactor is Mg(2+). It depends on Mn(2+) as a cofactor.

The enzyme catalyses gamma-L-glutamyl-L-cysteine + glycine + ATP = glutathione + ADP + phosphate + H(+). It participates in sulfur metabolism; glutathione biosynthesis; glutathione from L-cysteine and L-glutamate: step 2/2. In Xanthomonas campestris pv. campestris (strain ATCC 33913 / DSM 3586 / NCPPB 528 / LMG 568 / P 25), this protein is Glutathione synthetase.